The sequence spans 384 residues: Alanine racemase (384 aa).

Catalysis depends on lysine 42, which acts as the Proton acceptor; specific for D-alanine. Lysine 42 is modified (N6-(pyridoxal phosphate)lysine). Arginine 140 is a binding site for substrate. The active-site Proton acceptor; specific for L-alanine is tyrosine 271. Substrate is bound at residue methionine 319.

It belongs to the alanine racemase family. In terms of assembly, homodimer. The cofactor is pyridoxal 5'-phosphate.

It catalyses the reaction L-alanine = D-alanine. It functions in the pathway amino-acid biosynthesis; D-alanine biosynthesis; D-alanine from L-alanine: step 1/1. Its function is as follows. Catalyzes the interconversion of L-alanine and D-alanine. This is Alanine racemase (alr) from Mycobacterium tuberculosis (strain CDC 1551 / Oshkosh).